A 339-amino-acid chain; its full sequence is Pyrimidine monooxygenase RutA (339 aa).

Residues 26-27 (IK), Asn92, Glu101, 117-118 (RY), and Ser167 contribute to the FMN site.

Belongs to the NtaA/SnaA/DszA monooxygenase family. RutA subfamily.

The enzyme catalyses uracil + FMNH2 + NADH + O2 = (Z)-3-ureidoacrylate + FMN + NAD(+) + H2O + H(+). It catalyses the reaction thymine + FMNH2 + NADH + O2 = (Z)-2-methylureidoacrylate + FMN + NAD(+) + H2O + H(+). Catalyzes the pyrimidine ring opening between N-3 and C-4 by an unusual flavin hydroperoxide-catalyzed mechanism, adding oxygen atoms in the process to yield ureidoacrylate peracid, that immediately reacts with FMN forming ureidoacrylate and FMN-N(5)-oxide. The FMN-N(5)-oxide reacts spontaneously with NADH to produce FMN. Requires the flavin reductase RutF to regenerate FMN in vivo. The protein is Pyrimidine monooxygenase RutA of Cronobacter sakazakii (strain ATCC BAA-894) (Enterobacter sakazakii).